Consider the following 487-residue polypeptide: RCC1 repeat-containing protein DDB_G0284033 (487 aa).

RCC1 repeat units follow at residues 66-127 (SNKV…FSGY), 207-259 (RSLI…ALSN), 260-313 (DGKL…ALTS), 373-426 (NGNI…IVET), and 428-483 (DGRF…SLNS).

This Dictyostelium discoideum (Social amoeba) protein is RCC1 repeat-containing protein DDB_G0284033.